A 349-amino-acid chain; its full sequence is Phosphoribosylformylglycinamidine cyclo-ligase (349 aa).

It belongs to the AIR synthase family.

It localises to the cytoplasm. The catalysed reaction is 2-formamido-N(1)-(5-O-phospho-beta-D-ribosyl)acetamidine + ATP = 5-amino-1-(5-phospho-beta-D-ribosyl)imidazole + ADP + phosphate + H(+). It functions in the pathway purine metabolism; IMP biosynthesis via de novo pathway; 5-amino-1-(5-phospho-D-ribosyl)imidazole from N(2)-formyl-N(1)-(5-phospho-D-ribosyl)glycinamide: step 2/2. This Methanococcus maripaludis (strain C7 / ATCC BAA-1331) protein is Phosphoribosylformylglycinamidine cyclo-ligase.